Reading from the N-terminus, the 438-residue chain is Coenzyme A disulfide reductase (438 aa).

8-33 (GAVAGGATCASQIRRLDKESDIIIFE) contacts FAD. Residues Thr15, Gln19, Arg22, Ser39, and Asn42 each coordinate substrate. Cys43 acts as the Nucleophile in catalysis. The active-site Redox-active is Cys43. Residue Lys71 coordinates substrate. Position 151–166 (151–166 (VLVVGAGYVSLEVLEN)) interacts with NADP(+). Residue 267–277 (TNVPNIYAIGD) coordinates FAD. His299 contacts substrate. Residue Tyr419 coordinates FAD. A substrate-binding site is contributed by Lys427.

Belongs to the class-III pyridine nucleotide-disulfide oxidoreductase family. In terms of assembly, homodimer. It depends on FAD as a cofactor.

It catalyses the reaction NADP(+) + 2 CoA = CoA-disulfide + NADPH + H(+). Catalyzes specifically the NADPH-dependent reduction of coenzyme A disulfide. The polypeptide is Coenzyme A disulfide reductase (Staphylococcus aureus (strain COL)).